The primary structure comprises 205 residues: Spermatogenesis-associated protein 24 (205 aa).

Residues 17-166 (LALDQLRDVI…QQKQIFRNHM (150 aa)) adopt a coiled-coil conformation. A required for interaction with CBX5 and TBPL1 region spans residues 138–185 (EDILNGKENEIKELQQVISQQKQIFRNHMSDFRIQKQQESYMAQVLDQ). The tract at residues 180–205 (AQVLDQKHKKASGTRQARSHQHPREK) is disordered. Over residues 186–205 (KHKKASGTRQARSHQHPREK) the composition is skewed to basic residues.

This sequence belongs to the SPATA24 family. Homodimer. Interacts with CBX3, CBX5, GMNN, GTF2B, TBPL1 and the polycomb proteins PHCF2, RNF2 and SCMH1 but not with CBX1 or PCGF2.

The protein localises to the cytoplasm. The protein resides in the nucleus. Its subcellular location is the nucleolus. It is found in the nucleoplasm. In terms of biological role, binds DNA with high affinity but does not bind to TATA boxes. Synergises with GMNN and TBP in activation of TATA box-containing promoters and with GMNN and TBPL1 in activation of the NF1 TATA-less promoter. May play a role in cytoplasm movement and removal during spermiogenesis. The protein is Spermatogenesis-associated protein 24 (SPATA24) of Homo sapiens (Human).